The chain runs to 396 residues: Phospholipase A1-II 4 (396 aa).

Catalysis depends on Ser221, which acts as the Acyl-ester intermediate. Catalysis depends on charge relay system residues Ser221, Asp282, and His319.

Belongs to the AB hydrolase superfamily. Lipase family.

It localises to the cytoplasm. Functionally, acylhydrolase that catalyzes the hydrolysis of phospholipids at the sn-1 position. The chain is Phospholipase A1-II 4 from Oryza sativa subsp. japonica (Rice).